The sequence spans 64 residues: Large ribosomal subunit protein bL33c (64 aa).

The protein belongs to the bacterial ribosomal protein bL33 family.

It localises to the plastid. It is found in the organellar chromatophore. This chain is Large ribosomal subunit protein bL33c, found in Paulinella chromatophora.